We begin with the raw amino-acid sequence, 39 residues long: uncharacterized protein (39 aa).

Belongs to the orthopoxvirus A30.5 protein family.

This is an uncharacterized protein from Bos taurus (Bovine).